The chain runs to 164 residues: Cytochrome c-type biogenesis protein CcmE (164 aa).

Residues 1–8 (MNPRRKQR) lie on the Cytoplasmic side of the membrane. The chain crosses the membrane as a helical; Signal-anchor for type II membrane protein span at residues 9-29 (LAVVGIIGFLIVSAVGLMLYA). Topologically, residues 30-164 (LNDSIDLFYT…YESSNGAGSK (135 aa)) are periplasmic. Heme-binding residues include His-128 and Tyr-132. The interval 142–164 (KGIKHVKPENMPTYESSNGAGSK) is disordered. The span at 154-164 (TYESSNGAGSK) shows a compositional bias: polar residues.

This sequence belongs to the CcmE/CycJ family.

The protein resides in the cell inner membrane. Its function is as follows. Heme chaperone required for the biogenesis of c-type cytochromes. Transiently binds heme delivered by CcmC and transfers the heme to apo-cytochromes in a process facilitated by CcmF and CcmH. The protein is Cytochrome c-type biogenesis protein CcmE of Alteromonas mediterranea (strain DSM 17117 / CIP 110805 / LMG 28347 / Deep ecotype).